A 962-amino-acid polypeptide reads, in one-letter code: Integrator complex subunit 7 (962 aa).

A phosphoserine mark is found at Ser338 and Ser809.

This sequence belongs to the Integrator subunit 7 family. Component of the Integrator complex, composed of core subunits INTS1, INTS2, INTS3, INTS4, INTS5, INTS6, INTS7, INTS8, INTS9/RC74, INTS10, INTS11/CPSF3L, INTS12, INTS13, INTS14 and INTS15. The core complex associates with protein phosphatase 2A subunits PPP2CA and PPP2R1A, to form the Integrator-PP2A (INTAC) complex. Interacts with NABP2.

It is found in the nucleus. It localises to the chromosome. Its subcellular location is the cytoplasm. Functionally, component of the integrator complex, a multiprotein complex that terminates RNA polymerase II (Pol II) transcription in the promoter-proximal region of genes. The integrator complex provides a quality checkpoint during transcription elongation by driving premature transcription termination of transcripts that are unfavorably configured for transcriptional elongation: the complex terminates transcription by (1) catalyzing dephosphorylation of the C-terminal domain (CTD) of Pol II subunit POLR2A/RPB1 and SUPT5H/SPT5, (2) degrading the exiting nascent RNA transcript via endonuclease activity and (3) promoting the release of Pol II from bound DNA. The integrator complex is also involved in terminating the synthesis of non-coding Pol II transcripts, such as enhancer RNAs (eRNAs), small nuclear RNAs (snRNAs), telomerase RNAs and long non-coding RNAs (lncRNAs). May be not involved in the recruitment of cytoplasmic dynein to the nuclear envelope by different components of the INT complex. Plays a role in DNA damage response (DDR) signaling during the S phase. The sequence is that of Integrator complex subunit 7 from Homo sapiens (Human).